The following is an 884-amino-acid chain: Protein translocase subunit SecA (884 aa).

Residues Q83, 101–105, and D491 each bind ATP; that span reads GEGKT.

This sequence belongs to the SecA family.

Its subcellular location is the plastid. It localises to the chloroplast stroma. The protein localises to the chloroplast thylakoid membrane. The enzyme catalyses ATP + H2O + cellular proteinSide 1 = ADP + phosphate + cellular proteinSide 2.. Has a central role in coupling the hydrolysis of ATP to the transfer of proteins across the thylakoid membrane. In Pyropia yezoensis (Susabi-nori), this protein is Protein translocase subunit SecA.